Consider the following 98-residue polypeptide: NADH-ubiquinone oxidoreductase chain 4L (98 aa).

The next 3 membrane-spanning stretches (helical) occupy residues 1-21 (MSMV…GLLI), 30-50 (LLCL…TILI), and 61-81 (IILL…LVMI).

Belongs to the complex I subunit 4L family. In terms of assembly, core subunit of respiratory chain NADH dehydrogenase (Complex I) which is composed of 45 different subunits.

The protein resides in the mitochondrion inner membrane. It carries out the reaction a ubiquinone + NADH + 5 H(+)(in) = a ubiquinol + NAD(+) + 4 H(+)(out). Functionally, core subunit of the mitochondrial membrane respiratory chain NADH dehydrogenase (Complex I) which catalyzes electron transfer from NADH through the respiratory chain, using ubiquinone as an electron acceptor. Part of the enzyme membrane arm which is embedded in the lipid bilayer and involved in proton translocation. The protein is NADH-ubiquinone oxidoreductase chain 4L (MT-ND4L) of Neovison vison (American mink).